We begin with the raw amino-acid sequence, 139 residues long: MFFRISTVFVVALAAFAAASPAPWGAPPPTTTTHPPVTTTVTVTAPATTTTIPASQCNTGDAQCCNSVQSATAPAVTSLLGLLGIVLEDINVLVGLSCDPISVIGVGGGANCVQQPVCCENNNFNGLINIGCTPINIFL.

The signal sequence occupies residues 1 to 21 (MFFRISTVFVVALAAFAAASP). Cystine bridges form between Cys-57/Cys-118, Cys-64/Cys-112, Cys-65/Cys-98, and Cys-119/Cys-132.

Belongs to the fungal hydrophobin family. Self-assembles to form functional amyloid fibrils called rodlets. Self-assembly into fibrillar rodlets occurs spontaneously at hydrophobic:hydrophilic interfaces and the rodlets further associate laterally to form amphipathic monolayers.

It is found in the secreted. The protein localises to the cell wall. In terms of biological role, aerial growth, conidiation, and dispersal of filamentous fungi in the environment rely upon a capability of their secreting small amphipathic proteins called hydrophobins (HPBs) with low sequence identity. Class I can self-assemble into an outermost layer of rodlet bundles on aerial cell surfaces, conferring cellular hydrophobicity that supports fungal growth, development and dispersal; whereas Class II form highly ordered films at water-air interfaces through intermolecular interactions but contribute nothing to the rodlet structure. Hah1 is a class I hydrophobin that is involved in aerial growth of mycelia, but does not play a role in pathogenesis. This is Class I hydrophobin 1 from Heterobasidion annosum (Root rot fungus).